The primary structure comprises 82 residues: Small ribosomal subunit protein uS17 (82 aa).

It belongs to the universal ribosomal protein uS17 family. In terms of assembly, part of the 30S ribosomal subunit.

In terms of biological role, one of the primary rRNA binding proteins, it binds specifically to the 5'-end of 16S ribosomal RNA. The chain is Small ribosomal subunit protein uS17 from Shewanella pealeana (strain ATCC 700345 / ANG-SQ1).